The chain runs to 798 residues: Interphotoreceptor matrix proteoglycan 1 (798 aa).

The signal sequence occupies residues 1-20 (MNLEIKHAILVLWIFLQVQG). Asn-142 carries an N-linked (GlcNAc...) asparagine glycan. The SEA 1 domain occupies 238 to 360 (SEEKVEFSIS…PEAYLTAADL (123 aa)). Thr-442 and Thr-445 each carry an O-linked (GalNAc...) threonine glycan. The SEA 2 domain maps to 574-687 (HELVVFFSLR…YSLDIEPADQ (114 aa)). N-linked (GlcNAc...) asparagine glycosylation is found at Asn-595 and Asn-619. The Heparin- and hyaluronan-binding signature appears at 624 to 632 (KQLEILSFR). 2 N-linked (GlcNAc...) asparagine glycosylation sites follow: Asn-633 and Asn-651. Residues 741 to 798 (ASQGQATPCRPPDHSTNQARQPSVKKLQRQQNKVVKKRNSELSATDFEELDDQDWEGN) form a disordered region. Residues 786 to 798 (DFEELDDQDWEGN) show a composition bias toward acidic residues.

In terms of processing, highly glycosylated (N- and O-linked carbohydrates and sialic acid).

Its subcellular location is the cell projection. It is found in the cilium. It localises to the photoreceptor outer segment. The protein localises to the secreted. The protein resides in the extracellular space. Its subcellular location is the extracellular matrix. It is found in the interphotoreceptor matrix. It localises to the photoreceptor inner segment. Its function is as follows. Chondroitin sulfate-, heparin- and hyaluronan-binding protein. May serve to form a basic macromolecular scaffold comprising the insoluble interphotoreceptor matrix. The polypeptide is Interphotoreceptor matrix proteoglycan 1 (Rattus norvegicus (Rat)).